A 361-amino-acid chain; its full sequence is Chorismate synthase (361 aa).

Residues Arg-48 and Arg-54 each coordinate NADP(+). FMN contacts are provided by residues 125–127 (RSS), 238–239 (NA), Gly-278, 293–297 (KPTSS), and Arg-319.

This sequence belongs to the chorismate synthase family. As to quaternary structure, homotetramer. FMNH2 serves as cofactor.

It carries out the reaction 5-O-(1-carboxyvinyl)-3-phosphoshikimate = chorismate + phosphate. It functions in the pathway metabolic intermediate biosynthesis; chorismate biosynthesis; chorismate from D-erythrose 4-phosphate and phosphoenolpyruvate: step 7/7. Catalyzes the anti-1,4-elimination of the C-3 phosphate and the C-6 proR hydrogen from 5-enolpyruvylshikimate-3-phosphate (EPSP) to yield chorismate, which is the branch point compound that serves as the starting substrate for the three terminal pathways of aromatic amino acid biosynthesis. This reaction introduces a second double bond into the aromatic ring system. This Salmonella choleraesuis (strain SC-B67) protein is Chorismate synthase.